The following is a 62-amino-acid chain: uncharacterized protein (62 aa).

The tract at residues 1-26 (MGELAASANHGHSPCYPERKGTPGDL) is disordered. The span at 17–26 (PERKGTPGDL) shows a compositional bias: basic and acidic residues.

This is an uncharacterized protein from Homo sapiens (Human).